A 500-amino-acid chain; its full sequence is NAD(P)H-quinone oxidoreductase chain 4, chloroplastic (500 aa).

Transmembrane regions (helical) follow at residues 4-24, 37-57, 84-104, 111-129, 134-154, 167-187, 208-228, 242-262, 272-292, 305-325, 330-350, 374-396, 411-431, and 462-482; these read FPWL…IFFL, ICIC…HFQL, GLSI…TLAA, SRLF…IGSF, LLLF…LLSM, FILY…GMGL, ALEI…SPII, HYST…YGLV, AHSI…IYAA, IAYS…SITD, GAIL…FLAG, IFTM…GFVA, FFMP…LTPI, and LFVS…PDFV.

This sequence belongs to the complex I subunit 4 family.

It localises to the plastid. The protein localises to the chloroplast thylakoid membrane. The catalysed reaction is a plastoquinone + NADH + (n+1) H(+)(in) = a plastoquinol + NAD(+) + n H(+)(out). It catalyses the reaction a plastoquinone + NADPH + (n+1) H(+)(in) = a plastoquinol + NADP(+) + n H(+)(out). This chain is NAD(P)H-quinone oxidoreductase chain 4, chloroplastic, found in Chloranthus spicatus (Chulantree).